We begin with the raw amino-acid sequence, 338 residues long: GTPase Obg (338 aa).

In terms of domain architecture, Obg spans 1–159; that stretch reads MSFIDEVKIH…RWLRLELKLM (159 aa). Positions 160-331 constitute an OBG-type G domain; the sequence is ADVGLLGMPS…LLDEIARQLW (172 aa). Residues 166-173, 191-195, 213-216, 283-286, and 312-314 contribute to the GTP site; these read GMPSVGKS, FTTLK, DIPG, NKMD, and SAA. Mg(2+) contacts are provided by Ser173 and Thr193.

The protein belongs to the TRAFAC class OBG-HflX-like GTPase superfamily. OBG GTPase family. Monomer. The cofactor is Mg(2+).

The protein resides in the cytoplasm. An essential GTPase which binds GTP, GDP and possibly (p)ppGpp with moderate affinity, with high nucleotide exchange rates and a fairly low GTP hydrolysis rate. Plays a role in control of the cell cycle, stress response, ribosome biogenesis and in those bacteria that undergo differentiation, in morphogenesis control. The sequence is that of GTPase Obg from Geotalea daltonii (strain DSM 22248 / JCM 15807 / FRC-32) (Geobacter daltonii).